Reading from the N-terminus, the 222-residue chain is Large ribosomal subunit protein uL1 (222 aa).

It belongs to the universal ribosomal protein uL1 family. As to quaternary structure, part of the 50S ribosomal subunit.

In terms of biological role, binds directly to 23S rRNA. Probably involved in E site tRNA release. Its function is as follows. Protein L1 is also a translational repressor protein, it controls the translation of its operon by binding to its mRNA. This chain is Large ribosomal subunit protein uL1, found in Pyrobaculum islandicum (strain DSM 4184 / JCM 9189 / GEO3).